A 321-amino-acid chain; its full sequence is Beta-ketoacyl-[acyl-carrier-protein] synthase III (321 aa).

Active-site residues include C114 and H248. Positions Q249–R253 are ACP-binding. The active site involves N278.

This sequence belongs to the thiolase-like superfamily. FabH family. Homodimer.

The protein localises to the cytoplasm. It catalyses the reaction malonyl-[ACP] + acetyl-CoA + H(+) = 3-oxobutanoyl-[ACP] + CO2 + CoA. Its pathway is lipid metabolism; fatty acid biosynthesis. In terms of biological role, catalyzes the condensation reaction of fatty acid synthesis by the addition to an acyl acceptor of two carbons from malonyl-ACP. Catalyzes the first condensation reaction which initiates fatty acid synthesis and may therefore play a role in governing the total rate of fatty acid production. Possesses both acetoacetyl-ACP synthase and acetyl transacylase activities. Its substrate specificity determines the biosynthesis of branched-chain and/or straight-chain of fatty acids. This chain is Beta-ketoacyl-[acyl-carrier-protein] synthase III, found in Methylococcus capsulatus (strain ATCC 33009 / NCIMB 11132 / Bath).